A 105-amino-acid chain; its full sequence is Thioredoxin (105 aa).

One can recognise a Thioredoxin domain in the interval 1-105 (MANNVMDSSF…SLLDWINKSI (105 aa)). Cys30 and Cys33 form a disulfide bridge.

The protein belongs to the thioredoxin family.

Its function is as follows. Component of the thioredoxin-thioredoxin reductase system. Participates in various redox reactions through the reversible oxidation of its active center dithiol to a disulfide and catalyzes dithiol-disulfide exchange reactions. This is Thioredoxin (trxA) from Rickettsia conorii (strain ATCC VR-613 / Malish 7).